The primary structure comprises 295 residues: 4-hydroxy-tetrahydrodipicolinate synthase (295 aa).

Pyruvate is bound at residue Thr46. Catalysis depends on Tyr134, which acts as the Proton donor/acceptor. The Schiff-base intermediate with substrate role is filled by Lys162. Ile205 contributes to the pyruvate binding site.

This sequence belongs to the DapA family. As to quaternary structure, homotetramer; dimer of dimers.

The protein localises to the cytoplasm. It catalyses the reaction L-aspartate 4-semialdehyde + pyruvate = (2S,4S)-4-hydroxy-2,3,4,5-tetrahydrodipicolinate + H2O + H(+). It participates in amino-acid biosynthesis; L-lysine biosynthesis via DAP pathway; (S)-tetrahydrodipicolinate from L-aspartate: step 3/4. Functionally, catalyzes the condensation of (S)-aspartate-beta-semialdehyde [(S)-ASA] and pyruvate to 4-hydroxy-tetrahydrodipicolinate (HTPA). This is 4-hydroxy-tetrahydrodipicolinate synthase from Anaeromyxobacter dehalogenans (strain 2CP-C).